A 372-amino-acid polypeptide reads, in one-letter code: Peptidyl-prolyl cis-trans isomerase D (372 aa).

Positions 14–178 (YFDISIGGKS…KEALIVDCGE (165 aa)) constitute a PPIase cyclophilin-type domain. TPR repeat units lie at residues 219 to 252 (AKAS…INEE), 271 to 304 (FSLN…GGVK), and 309 to 342 (AKAF…APND).

The protein belongs to the cyclophilin-type PPIase family. PPIase D subfamily.

It localises to the cytoplasm. The enzyme catalyses [protein]-peptidylproline (omega=180) = [protein]-peptidylproline (omega=0). Its function is as follows. PPIases accelerate the folding of proteins. It catalyzes the cis-trans isomerization of proline imidic peptide bonds in oligopeptides. This Gibberella zeae (strain ATCC MYA-4620 / CBS 123657 / FGSC 9075 / NRRL 31084 / PH-1) (Wheat head blight fungus) protein is Peptidyl-prolyl cis-trans isomerase D (CPR6).